The chain runs to 380 residues: Glutamate 5-kinase (380 aa).

Position 20 (K20) interacts with ATP. Substrate-binding residues include S59, D146, and N158. 220–226 (TGGMYSK) is an ATP binding site. Residues 285–363 (SGTVTVDEGA…HEVAAILGDA (79 aa)) enclose the PUA domain.

The protein belongs to the glutamate 5-kinase family.

The protein resides in the cytoplasm. The catalysed reaction is L-glutamate + ATP = L-glutamyl 5-phosphate + ADP. The protein operates within amino-acid biosynthesis; L-proline biosynthesis; L-glutamate 5-semialdehyde from L-glutamate: step 1/2. Functionally, catalyzes the transfer of a phosphate group to glutamate to form L-glutamate 5-phosphate. This chain is Glutamate 5-kinase, found in Nitratidesulfovibrio vulgaris (strain ATCC 29579 / DSM 644 / CCUG 34227 / NCIMB 8303 / VKM B-1760 / Hildenborough) (Desulfovibrio vulgaris).